Here is a 201-residue protein sequence, read N- to C-terminus: Large ribosomal subunit protein uL4 (201 aa).

Positions 44–68 are disordered; it reads RAQKSRADVSGSGRKPWRQKGTGRA.

Belongs to the universal ribosomal protein uL4 family. As to quaternary structure, part of the 50S ribosomal subunit.

One of the primary rRNA binding proteins, this protein initially binds near the 5'-end of the 23S rRNA. It is important during the early stages of 50S assembly. It makes multiple contacts with different domains of the 23S rRNA in the assembled 50S subunit and ribosome. Functionally, forms part of the polypeptide exit tunnel. This is Large ribosomal subunit protein uL4 from Buchnera aphidicola subsp. Schizaphis graminum (strain Sg).